Consider the following 375-residue polypeptide: Probable disease resistance protein At1g52660 (375 aa).

In terms of domain architecture, NB-ARC spans 158 to 372 (ENTGIIGLYG…LSNSPPNFSG (215 aa)). An ATP-binding site is contributed by 167–174 (GVEGVGKT).

Functionally, possible disease resistance protein. The sequence is that of Probable disease resistance protein At1g52660 from Arabidopsis thaliana (Mouse-ear cress).